The following is a 486-amino-acid chain: Protein nucleotidyltransferase YdiU (486 aa).

Positions 90, 92, 93, 113, 125, 126, 176, and 183 each coordinate ATP. Residue Asp252 is the Proton acceptor of the active site. Asn253 and Asp262 together coordinate Mg(2+). Asp262 provides a ligand contact to ATP.

This sequence belongs to the SELO family. Mg(2+) serves as cofactor. Mn(2+) is required as a cofactor.

The catalysed reaction is L-seryl-[protein] + ATP = 3-O-(5'-adenylyl)-L-seryl-[protein] + diphosphate. It carries out the reaction L-threonyl-[protein] + ATP = 3-O-(5'-adenylyl)-L-threonyl-[protein] + diphosphate. It catalyses the reaction L-tyrosyl-[protein] + ATP = O-(5'-adenylyl)-L-tyrosyl-[protein] + diphosphate. The enzyme catalyses L-histidyl-[protein] + UTP = N(tele)-(5'-uridylyl)-L-histidyl-[protein] + diphosphate. The catalysed reaction is L-seryl-[protein] + UTP = O-(5'-uridylyl)-L-seryl-[protein] + diphosphate. It carries out the reaction L-tyrosyl-[protein] + UTP = O-(5'-uridylyl)-L-tyrosyl-[protein] + diphosphate. In terms of biological role, nucleotidyltransferase involved in the post-translational modification of proteins. It can catalyze the addition of adenosine monophosphate (AMP) or uridine monophosphate (UMP) to a protein, resulting in modifications known as AMPylation and UMPylation. The sequence is that of Protein nucleotidyltransferase YdiU from Pseudomonas putida (strain ATCC 47054 / DSM 6125 / CFBP 8728 / NCIMB 11950 / KT2440).